Reading from the N-terminus, the 651-residue chain is Threonine--tRNA ligase (651 aa).

In terms of domain architecture, TGS spans 1-64 (MSSVVHVTLP…EKDCTLQVLT (64 aa)). The interval 245–535 (DHRRLGPELG…LTEHYAGNFP (291 aa)) is catalytic. 3 residues coordinate Zn(2+): Cys336, His387, and His512.

Belongs to the class-II aminoacyl-tRNA synthetase family. As to quaternary structure, homodimer. The cofactor is Zn(2+).

The protein resides in the cytoplasm. It carries out the reaction tRNA(Thr) + L-threonine + ATP = L-threonyl-tRNA(Thr) + AMP + diphosphate + H(+). Functionally, catalyzes the attachment of threonine to tRNA(Thr) in a two-step reaction: L-threonine is first activated by ATP to form Thr-AMP and then transferred to the acceptor end of tRNA(Thr). Also edits incorrectly charged L-seryl-tRNA(Thr). This is Threonine--tRNA ligase from Symbiobacterium thermophilum (strain DSM 24528 / JCM 14929 / IAM 14863 / T).